We begin with the raw amino-acid sequence, 268 residues long: Ribosomal RNA small subunit methyltransferase A (268 aa).

S-adenosyl-L-methionine contacts are provided by Asn19, Leu21, Gly46, Glu67, Asp92, and Asn113.

The protein belongs to the class I-like SAM-binding methyltransferase superfamily. rRNA adenine N(6)-methyltransferase family. RsmA subfamily.

It is found in the cytoplasm. The enzyme catalyses adenosine(1518)/adenosine(1519) in 16S rRNA + 4 S-adenosyl-L-methionine = N(6)-dimethyladenosine(1518)/N(6)-dimethyladenosine(1519) in 16S rRNA + 4 S-adenosyl-L-homocysteine + 4 H(+). Functionally, specifically dimethylates two adjacent adenosines (A1518 and A1519) in the loop of a conserved hairpin near the 3'-end of 16S rRNA in the 30S particle. May play a critical role in biogenesis of 30S subunits. The polypeptide is Ribosomal RNA small subunit methyltransferase A (Tolumonas auensis (strain DSM 9187 / NBRC 110442 / TA 4)).